A 197-amino-acid chain; its full sequence is dTTP/UTP pyrophosphatase (197 aa).

D70 acts as the Proton acceptor in catalysis.

This sequence belongs to the Maf family. YhdE subfamily. The cofactor is a divalent metal cation.

The protein localises to the cytoplasm. The catalysed reaction is dTTP + H2O = dTMP + diphosphate + H(+). It catalyses the reaction UTP + H2O = UMP + diphosphate + H(+). Its function is as follows. Nucleoside triphosphate pyrophosphatase that hydrolyzes dTTP and UTP. May have a dual role in cell division arrest and in preventing the incorporation of modified nucleotides into cellular nucleic acids. The sequence is that of dTTP/UTP pyrophosphatase (yceF2) from Salmonella choleraesuis (strain SC-B67).